The primary structure comprises 124 residues: Fluoride-specific ion channel FluC (124 aa).

4 helical membrane-spanning segments follow: residues Val-4–Leu-24, Phe-35–Gly-55, Pro-62–Phe-82, and Leu-95–Leu-115. Positions 74 and 77 each coordinate Na(+).

This sequence belongs to the fluoride channel Fluc/FEX (TC 1.A.43) family.

It is found in the cell inner membrane. It carries out the reaction fluoride(in) = fluoride(out). Na(+) is not transported, but it plays an essential structural role and its presence is essential for fluoride channel function. In terms of biological role, fluoride-specific ion channel. Important for reducing fluoride concentration in the cell, thus reducing its toxicity. This Shewanella halifaxensis (strain HAW-EB4) protein is Fluoride-specific ion channel FluC.